The primary structure comprises 514 residues: Pantetheinase (514 aa).

The N-terminal stretch at 1-22 is a signal peptide; that stretch reads MITSRLLVYVAVLVLCVIKVSS. Residue N39 is glycosylated (N-linked (GlcNAc...) asparagine). One can recognise a CN hydrolase domain in the interval 40 to 307; sequence ATLVPVSHEE…GKLLLSQLDS (268 aa). The active-site Proton acceptor is the E80. N-linked (GlcNAc...) asparagine glycans are attached at residues N87 and N147. K179 functions as the Proton donor in the catalytic mechanism. C212 serves as the catalytic Nucleophile. 2 N-linked (GlcNAc...) asparagine glycosylation sites follow: N316 and N354. D492 is lipidated: GPI-anchor amidated aspartate. Positions 493–514 are cleaved as a propeptide — removed in mature form; that stretch reads PRSQVPGVMLLVIIPIVCSLSW.

Belongs to the carbon-nitrogen hydrolase superfamily. BTD/VNN family. In terms of assembly, monomer.

The protein localises to the cell membrane. It carries out the reaction (R)-pantetheine + H2O = cysteamine + (R)-pantothenate. In terms of biological role, amidohydrolase that hydrolyzes specifically one of the carboamide linkages in D-pantetheine thus recycling pantothenic acid (vitamin B5) and releasing cysteamine. This is Pantetheinase (VNN1) from Canis lupus familiaris (Dog).